A 247-amino-acid chain; its full sequence is 1-(5-phosphoribosyl)-5-[(5-phosphoribosylamino)methylideneamino] imidazole-4-carboxamide isomerase (247 aa).

The active-site Proton acceptor is aspartate 8. Aspartate 129 serves as the catalytic Proton donor.

It belongs to the HisA/HisF family.

The protein localises to the cytoplasm. It catalyses the reaction 1-(5-phospho-beta-D-ribosyl)-5-[(5-phospho-beta-D-ribosylamino)methylideneamino]imidazole-4-carboxamide = 5-[(5-phospho-1-deoxy-D-ribulos-1-ylimino)methylamino]-1-(5-phospho-beta-D-ribosyl)imidazole-4-carboxamide. The protein operates within amino-acid biosynthesis; L-histidine biosynthesis; L-histidine from 5-phospho-alpha-D-ribose 1-diphosphate: step 4/9. The protein is 1-(5-phosphoribosyl)-5-[(5-phosphoribosylamino)methylideneamino] imidazole-4-carboxamide isomerase of Rhodospirillum centenum (strain ATCC 51521 / SW).